A 122-amino-acid polypeptide reads, in one-letter code: Large ribosomal subunit protein uL14c (122 aa).

The protein belongs to the universal ribosomal protein uL14 family. In terms of assembly, part of the 50S ribosomal subunit.

Its subcellular location is the plastid. It is found in the chloroplast. Its function is as follows. Binds to 23S rRNA. In Chlorella vulgaris (Green alga), this protein is Large ribosomal subunit protein uL14c.